Here is a 427-residue protein sequence, read N- to C-terminus: U1 small nuclear ribonucleoprotein 70 kDa (427 aa).

Disordered regions lie at residues 82–102 (EPGD…SQKR) and 215–427 (RGRT…EYVR). Residues 93 to 102 (PEVELPSQKR) show a composition bias toward basic and acidic residues. Residues 138–216 (KTLFVSRLNY…RRVLVDVERG (79 aa)) form the RRM domain. Residues 227-241 (LGGGLGTSRVGGGEE) are compositionally biased toward gly residues. Composition is skewed to basic and acidic residues over residues 257–402 (EPSR…RYDK) and 409–427 (RYER…EYVR). Ser282 carries the phosphoserine modification.

Component of the spliceosome. Interacts with CYP63, U2AF35A, U2AF35B, SRZ21, RSZ22, SR34, SR45, SR45A and SCL33. In terms of processing, phosphorylated. The association and dissociation with SR45 is not affected by the phosphorylation status. Ubiquitous.

The protein localises to the nucleus speckle. It localises to the nucleus. The protein resides in the nucleoplasm. In terms of biological role, mediates the splicing of pre-mRNA by binding to the loop I region of U1-snRNA. The polypeptide is U1 small nuclear ribonucleoprotein 70 kDa (RNU1) (Arabidopsis thaliana (Mouse-ear cress)).